A 467-amino-acid chain; its full sequence is ATP synthase subunit beta (467 aa).

150 to 157 (GGAGVGKT) lines the ATP pocket.

This sequence belongs to the ATPase alpha/beta chains family. F-type ATPases have 2 components, CF(1) - the catalytic core - and CF(0) - the membrane proton channel. CF(1) has five subunits: alpha(3), beta(3), gamma(1), delta(1), epsilon(1). CF(0) has three main subunits: a(1), b(2) and c(9-12). The alpha and beta chains form an alternating ring which encloses part of the gamma chain. CF(1) is attached to CF(0) by a central stalk formed by the gamma and epsilon chains, while a peripheral stalk is formed by the delta and b chains.

Its subcellular location is the cell inner membrane. It catalyses the reaction ATP + H2O + 4 H(+)(in) = ADP + phosphate + 5 H(+)(out). Produces ATP from ADP in the presence of a proton gradient across the membrane. The catalytic sites are hosted primarily by the beta subunits. The protein is ATP synthase subunit beta of Aliivibrio fischeri (strain MJ11) (Vibrio fischeri).